The sequence spans 778 residues: Mitochondrial intermediate peptidase (778 aa).

A mitochondrion-targeting transit peptide spans 1-37 (MIRTVTRPRQWQRWVYSSCLLQRAVPPAAARQQPRFT). H557 contacts Zn(2+). E558 is an active-site residue. 2 residues coordinate Zn(2+): H561 and H564.

The protein belongs to the peptidase M3 family. Zn(2+) is required as a cofactor.

It is found in the mitochondrion matrix. It catalyses the reaction Release of an N-terminal octapeptide as second stage of processing of some proteins imported into the mitochondrion.. Functionally, cleaves proteins, imported into the mitochondrion, to their mature size. While most mitochondrial precursor proteins are processed to the mature form in one step by mitochondrial processing peptidase (MPP), the sequential cleavage by MIP of an octapeptide after initial processing by MPP is a required step for a subgroup of nuclear-encoded precursor proteins destined for the matrix or the inner membrane. In Chaetomium globosum (strain ATCC 6205 / CBS 148.51 / DSM 1962 / NBRC 6347 / NRRL 1970) (Soil fungus), this protein is Mitochondrial intermediate peptidase (OCT1).